We begin with the raw amino-acid sequence, 668 residues long: Probable potassium transport system protein Kup (668 aa).

12 helical membrane passes run 17-37 (GILVAMGVVYGDIGTSPLYVM), 59-79 (VSLIFWTLTILTTIKYVVIAL), 104-124 (IIPAMIGGAALLADGVLTPAV), 148-168 (TIIVVITLTIILILFSVQRFG), 175-195 (AFGPIMFLWFTFLGIIGLMNF), 221-241 (LGLFILGNIFLATTGAEALYS), 256-276 (PYIKICLILNYLGQAAWLLTV), 299-319 (ILVFGVVFATIAAVIASQALI), 350-370 (MYIPAVNLILWLACSAIVLAF), 380-400 (YGLSITITMLMTTILLLFYLL), 403-423 (IPAWSAYLISLFFAAIEVVFF), and 430-450 (FFHGGYVAVGMAVFLLCIMII).

Belongs to the HAK/KUP transporter (TC 2.A.72) family.

Its subcellular location is the cell membrane. It catalyses the reaction K(+)(in) + H(+)(in) = K(+)(out) + H(+)(out). Its function is as follows. Transport of potassium into the cell. Likely operates as a K(+):H(+) symporter. This is Probable potassium transport system protein Kup from Enterococcus faecalis (strain ATCC 700802 / V583).